A 266-amino-acid polypeptide reads, in one-letter code: Probable dihydroorotate dehydrogenase B (NAD(+)), electron transfer subunit (266 aa).

The region spanning 5–99 (NVPEVLEIKR…RGPYGRGFEL (95 aa)) is the FAD-binding FR-type domain. [2Fe-2S] cluster is bound by residues cysteine 217, cysteine 222, cysteine 225, and cysteine 235.

This sequence belongs to the PyrK family. In terms of assembly, heterotetramer of 2 PyrK and 2 PyrD type B subunits. Requires [2Fe-2S] cluster as cofactor. FAD is required as a cofactor.

The protein operates within pyrimidine metabolism; UMP biosynthesis via de novo pathway; orotate from (S)-dihydroorotate (NAD(+) route): step 1/1. Responsible for channeling the electrons from the oxidation of dihydroorotate from the FMN redox center in the PyrD type B subunit to the ultimate electron acceptor NAD(+). This is Probable dihydroorotate dehydrogenase B (NAD(+)), electron transfer subunit from Methanothermobacter thermautotrophicus (strain ATCC 29096 / DSM 1053 / JCM 10044 / NBRC 100330 / Delta H) (Methanobacterium thermoautotrophicum).